Reading from the N-terminus, the 645-residue chain is tRNA 5-methylaminomethyl-2-thiouridine biosynthesis bifunctional protein MnmC (645 aa).

Residues 1-230 (MPMSEPIDWL…KRHNLHAVFD (230 aa)) form a tRNA (mnm(5)s(2)U34)-methyltransferase region. An FAD-dependent cmnm(5)s(2)U34 oxidoreductase region spans residues 254 to 645 (LGAGIAGAAA…LASERLGRRR (392 aa)).

This sequence in the N-terminal section; belongs to the methyltransferase superfamily. tRNA (mnm(5)s(2)U34)-methyltransferase family. The protein in the C-terminal section; belongs to the DAO family. FAD serves as cofactor.

It is found in the cytoplasm. The enzyme catalyses 5-aminomethyl-2-thiouridine(34) in tRNA + S-adenosyl-L-methionine = 5-methylaminomethyl-2-thiouridine(34) in tRNA + S-adenosyl-L-homocysteine + H(+). Functionally, catalyzes the last two steps in the biosynthesis of 5-methylaminomethyl-2-thiouridine (mnm(5)s(2)U) at the wobble position (U34) in tRNA. Catalyzes the FAD-dependent demodification of cmnm(5)s(2)U34 to nm(5)s(2)U34, followed by the transfer of a methyl group from S-adenosyl-L-methionine to nm(5)s(2)U34, to form mnm(5)s(2)U34. In Delftia acidovorans (strain DSM 14801 / SPH-1), this protein is tRNA 5-methylaminomethyl-2-thiouridine biosynthesis bifunctional protein MnmC.